We begin with the raw amino-acid sequence, 485 residues long: Rhamnulokinase (485 aa).

Position 12–16 (A12–R16) interacts with ATP. Substrate is bound by residues G80 and H238–T240. Catalysis depends on D239, which acts as the Proton acceptor. T261 contributes to the ATP binding site. N298 contributes to the substrate binding site. E306 provides a ligand contact to ATP. The cysteines at positions 355 and 372 are disulfide-linked. G404 serves as a coordination point for ATP.

This sequence belongs to the rhamnulokinase family. Requires Mg(2+) as cofactor.

The catalysed reaction is L-rhamnulose + ATP = L-rhamnulose 1-phosphate + ADP + H(+). It participates in carbohydrate degradation; L-rhamnose degradation; glycerone phosphate from L-rhamnose: step 2/3. In terms of biological role, involved in the catabolism of L-rhamnose (6-deoxy-L-mannose). Catalyzes the transfer of the gamma-phosphate group from ATP to the 1-hydroxyl group of L-rhamnulose to yield L-rhamnulose 1-phosphate. The polypeptide is Rhamnulokinase (Bacteroides thetaiotaomicron (strain ATCC 29148 / DSM 2079 / JCM 5827 / CCUG 10774 / NCTC 10582 / VPI-5482 / E50)).